The chain runs to 356 residues: Probable dual-specificity RNA methyltransferase RlmN (356 aa).

Catalysis depends on glutamate 100, which acts as the Proton acceptor. One can recognise a Radical SAM core domain in the interval 106–340 (TQQRLTVCLS…VSLRASRGLD (235 aa)). An intrachain disulfide couples cysteine 113 to cysteine 345. [4Fe-4S] cluster-binding residues include cysteine 120, cysteine 124, and cysteine 127. S-adenosyl-L-methionine-binding positions include 167-168 (GE), serine 197, 226-228 (SLH), and asparagine 302. Catalysis depends on cysteine 345, which acts as the S-methylcysteine intermediate.

This sequence belongs to the radical SAM superfamily. RlmN family. It depends on [4Fe-4S] cluster as a cofactor.

Its subcellular location is the cytoplasm. The catalysed reaction is adenosine(2503) in 23S rRNA + 2 reduced [2Fe-2S]-[ferredoxin] + 2 S-adenosyl-L-methionine = 2-methyladenosine(2503) in 23S rRNA + 5'-deoxyadenosine + L-methionine + 2 oxidized [2Fe-2S]-[ferredoxin] + S-adenosyl-L-homocysteine. The enzyme catalyses adenosine(37) in tRNA + 2 reduced [2Fe-2S]-[ferredoxin] + 2 S-adenosyl-L-methionine = 2-methyladenosine(37) in tRNA + 5'-deoxyadenosine + L-methionine + 2 oxidized [2Fe-2S]-[ferredoxin] + S-adenosyl-L-homocysteine. Functionally, specifically methylates position 2 of adenine 2503 in 23S rRNA and position 2 of adenine 37 in tRNAs. This chain is Probable dual-specificity RNA methyltransferase RlmN, found in Prochlorococcus marinus (strain MIT 9303).